The chain runs to 592 residues: K(+) efflux antiporter 4 (592 aa).

Residues 1-35 form the signal peptide; the sequence is MRRCKNNTDKFSVITMRLLTLLLICTFFFFFSFAY. Helical transmembrane passes span 169-189, 193-213, 221-241, 248-268, 279-299, 313-333, 343-363, 388-408, 437-457, 462-482, 491-511, and 535-555; these read LISD…AFAC, PVIT…LSFV, TVAQ…FSAA, AVAI…SGIT, GIFV…KFLM, VGTL…LPVL, VLSM…LFVL, LAAV…GLSL, NFFA…HFLW, ILLA…AIVV, TAVL…VLLS, and LVTT…GVLL.

Belongs to the monovalent cation:proton antiporter 2 (CPA2) transporter (TC 2.A.37) family. KEA (TC 2.A.37.1) subfamily. Expressed in roots, stems, leaves, flowers and silique.

The protein resides in the golgi apparatus membrane. It is found in the golgi apparatus. It localises to the trans-Golgi network membrane. The protein localises to the prevacuolar compartment membrane. Its subcellular location is the endomembrane system. The enzyme catalyses K(+)(in) + H(+)(out) = K(+)(out) + H(+)(in). Its function is as follows. Electroneutral K(+)/H(+) efflux antiporter involved in K(+) homeostasis and osmotic adjustment. Together with KEA5 and KEA6, promotes growth and development, and facilitates endosomal pH and ions homeostasis, as well as salt tolerance (e.g. K(+), NaCl and LiCl), probably by supporting cell wall biosynthesis during rapid etiolated seedling growth. The sequence is that of K(+) efflux antiporter 4 from Arabidopsis thaliana (Mouse-ear cress).